Here is a 257-residue protein sequence, read N- to C-terminus: Lipid A 4'-phosphatase (257 aa).

The next 6 membrane-spanning stretches (helical) occupy residues 21–41, 85–105, 119–139, 174–194, 201–221, and 225–245; these read FGAF…FRAF, IFFR…IECY, KLKV…NVIL, CSFV…LLFV, ALVP…LSFG, and LSDV…LLAL.

Belongs to the lipid A LpxF 4'-phosphatase family.

It is found in the cell inner membrane. The protein operates within bacterial outer membrane biogenesis; LPS lipid A biosynthesis. Its function is as follows. Probably removes the 4'-phosphate moiety from lipid A species. Not seen to act on other membrane components, nor does it dephosphorylate the 1-phosphate group of lipid A and/or lipid A precursors. This Rhizobium etli (strain ATCC 51251 / DSM 11541 / JCM 21823 / NBRC 15573 / CFN 42) protein is Lipid A 4'-phosphatase.